A 228-amino-acid chain; its full sequence is Serum amyloid P-component (228 aa).

Positions 1–20 (MDKLLLWMSVFTSLLSEAFA) are cleaved as a signal peptide. The region spanning 25–224 (NQKVFVFPRE…YVVIKPRMWD (200 aa)) is the Pentraxin (PTX) domain. Asparagine 52 is a glycosylation site (N-linked (GlcNAc...) asparagine). Residues cysteine 56 and cysteine 115 are joined by a disulfide bond. The Ca(2+) site is built by aspartate 78, asparagine 79, glutamate 156, glutamine 157, aspartate 158, and glutamine 168.

Belongs to the pentraxin family. In terms of assembly, homopentamer. Pentraxin (or pentaxin) have a discoid arrangement of 5 non-covalently bound subunits. Ca(2+) serves as cofactor.

It is found in the secreted. The protein is Serum amyloid P-component (Apcs) of Rattus norvegicus (Rat).